We begin with the raw amino-acid sequence, 438 residues long: UDP-N-acetylmuramate--L-alanine ligase (438 aa).

108-114 (GAHGKTS) lines the ATP pocket.

This sequence belongs to the MurCDEF family.

It localises to the cytoplasm. The catalysed reaction is UDP-N-acetyl-alpha-D-muramate + L-alanine + ATP = UDP-N-acetyl-alpha-D-muramoyl-L-alanine + ADP + phosphate + H(+). It participates in cell wall biogenesis; peptidoglycan biosynthesis. Its function is as follows. Cell wall formation. The chain is UDP-N-acetylmuramate--L-alanine ligase from Oceanobacillus iheyensis (strain DSM 14371 / CIP 107618 / JCM 11309 / KCTC 3954 / HTE831).